A 482-amino-acid polypeptide reads, in one-letter code: MKFIVKPHPEIFVKSESVRKRFTKILERNIRTILQRRTESVAVFNRRDHIEVTSESDKYFKETLEVLTQTPGIHHSLEVQQSEFKDLHNIYEQVLERSGALIEGKTFSVRAKRRGKHDFTSIELERYVGGGLNQAVESAKVKLKNPDITVKVEVENDKLNQVIERHKGLGGFPLGTQEDLLSLISGGFDSGVSSYLHIKRGSKVHYCFFNLGGPAHEIGVKQVSHYLWDKYGSSAKVKFISIDFEPVVAEILENVEDGQMGVVLKRMFMRAGGMVAERFGIEALVTGEALGQVSSQTLTNLRHIDNVTDTLILRPLINWDKEDIIDLSRKIGTEDFAKVMPEYCGVISKKPTVKAKKGKLEAEEAKFNFEVLEQVIENARIMDIRDIEKESQEQAPEVEQVQAVAEHAVVLDIRSPDEEDESPLEIDGVEIKHIPFFKLSTQFGDLDQSKEYLLYCDRGVMSRLQALYLQEQGFHNVKVYRP.

The region spanning 61–165 (KETLEVLTQT…NDKLNQVIER (105 aa)) is the THUMP domain. Residues 183–184 (LI), Lys-265, Gly-287, and Gln-296 contribute to the ATP site. A disulfide bridge connects residues Cys-344 and Cys-456. In terms of domain architecture, Rhodanese spans 404–482 (VAEHAVVLDI…GFHNVKVYRP (79 aa)). The Cysteine persulfide intermediate role is filled by Cys-456.

Belongs to the ThiI family.

It is found in the cytoplasm. The catalysed reaction is [ThiI sulfur-carrier protein]-S-sulfanyl-L-cysteine + a uridine in tRNA + 2 reduced [2Fe-2S]-[ferredoxin] + ATP + H(+) = [ThiI sulfur-carrier protein]-L-cysteine + a 4-thiouridine in tRNA + 2 oxidized [2Fe-2S]-[ferredoxin] + AMP + diphosphate. It catalyses the reaction [ThiS sulfur-carrier protein]-C-terminal Gly-Gly-AMP + S-sulfanyl-L-cysteinyl-[cysteine desulfurase] + AH2 = [ThiS sulfur-carrier protein]-C-terminal-Gly-aminoethanethioate + L-cysteinyl-[cysteine desulfurase] + A + AMP + 2 H(+). It participates in cofactor biosynthesis; thiamine diphosphate biosynthesis. Catalyzes the ATP-dependent transfer of a sulfur to tRNA to produce 4-thiouridine in position 8 of tRNAs, which functions as a near-UV photosensor. Also catalyzes the transfer of sulfur to the sulfur carrier protein ThiS, forming ThiS-thiocarboxylate. This is a step in the synthesis of thiazole, in the thiamine biosynthesis pathway. The sulfur is donated as persulfide by IscS. In Vibrio atlanticus (strain LGP32) (Vibrio splendidus (strain Mel32)), this protein is tRNA sulfurtransferase.